The sequence spans 420 residues: MLAVLGVIVAAVIVIALSIWLGKSRKRDLDRAMGKVAPDNKKTRDAKAAADARLAAEAEEAKAATAAEPAKSAESAKAEPAPAAQAEPEPAAAPKPESQPASKPTPAKPETPESVGSRLTRLKAKLAKSGNPFGKALFDILAKDNLSEADWEDVEDTLLLADVGADASAQLVDDLRTDARITGKADPAEVRATLKEKLLDLVGRDTDRRLNAEKPGAAKPSVIIMVGVNGTGKTTTAGKLARLFVAENKQVMMGAADTFRAAAADQLETWGARVNVPVVRSDKDGADPASVAFEASAKAKEANADVLIIDTAGRLQNKSNLMDELGKIRRVTEKNLPVDEVLLVLDATTGQNGMAQAKVFAEAIGITGVVLSKLDGSAKGGIVVSVQKELGVPVKLVGLGEGPDDLAPFDPEGFVDGILA.

The span at 28–62 shows a compositional bias: basic and acidic residues; sequence DLDRAMGKVAPDNKKTRDAKAAADARLAAEAEEAK. The interval 28–118 is disordered; sequence DLDRAMGKVA…PETPESVGSR (91 aa). Over residues 63-104 the composition is skewed to low complexity; that stretch reads AATAAEPAKSAESAKAEPAPAAQAEPEPAAAPKPESQPASKP. Residues 227-234, 310-314, and 372-375 contribute to the GTP site; these read GVNGTGKT, DTAGR, and SKLD.

The protein belongs to the GTP-binding SRP family. FtsY subfamily. In terms of assembly, part of the signal recognition particle protein translocation system, which is composed of SRP and FtsY.

Its subcellular location is the cell membrane. It localises to the cytoplasm. It carries out the reaction GTP + H2O = GDP + phosphate + H(+). Its function is as follows. Involved in targeting and insertion of nascent membrane proteins into the cytoplasmic membrane. Acts as a receptor for the complex formed by the signal recognition particle (SRP) and the ribosome-nascent chain (RNC). This is Signal recognition particle receptor FtsY from Bifidobacterium longum (strain NCC 2705).